A 494-amino-acid chain; its full sequence is Alpha-amylase-related protein (494 aa).

The N-terminal stretch at 1–20 (MFKFASAVILCLVAASSTQA) is a signal peptide. The residue at position 21 (Gln21) is a Pyrrolidone carboxylic acid. A disulfide bridge links Cys48 with Cys104. Residues Asn118, Gln169, and Asp178 each contribute to the Ca(2+) site. Residues Cys157 and Cys171 are joined by a disulfide bond. Arg206 serves as a coordination point for chloride. The active-site Nucleophile is Asp208. Residue His212 coordinates Ca(2+). The Proton donor role is filled by Glu245. Chloride-binding residues include Asn308 and Arg343. Cystine bridges form between Cys376/Cys382, Cys418/Cys441, and Cys448/Cys460.

Belongs to the glycosyl hydrolase 13 family. Monomer. Ca(2+) serves as cofactor. Requires chloride as cofactor.

The protein resides in the secreted. The enzyme catalyses Endohydrolysis of (1-&gt;4)-alpha-D-glucosidic linkages in polysaccharides containing three or more (1-&gt;4)-alpha-linked D-glucose units.. The polypeptide is Alpha-amylase-related protein (Amyrel) (Drosophila ercepeae (Fruit fly)).